Consider the following 384-residue polypeptide: MVSTTFRRIVSPCWRPFGIGEDSSPGSDDTNGRLDGLLWYKDSGNHITGEFSMAVVQANNLLEDHSQLESGPISLHESGPEATFVGVYDGHGGPEAARFVNDRLFYNIKRYTSEQRGMSPDVITRGFVATEEEFLGLVQEQWKTKPQIASVGACCLVGIVCNGLLYVANAGDSRVVLGKVANPFKELKAVQLSTEHNASIESVREELRLLHPDDPNIVVLKHKVWRVKGIIQVSRSIGDAYLKRAEFNQEPLLPKFRVPERFEKPIMRAEPTITVHKIHPEDQFLIFASDGLWEHLSNQEAVDIVNSCPRNGVARKLVKAALQEAAKKREMRYSDLEKIERGIRRHFHDDITVIVVFLHATNFATRTPISVKGGGLLSAHNPVL.

One can recognise a PPM-type phosphatase domain in the interval 47–358 (ITGEFSMAVV…DDITVIVVFL (312 aa)). S78 is modified (phosphoserine). Mn(2+) contacts are provided by D89, G90, D290, and D349.

It belongs to the PP2C family. The cofactor is Mg(2+). Requires Mn(2+) as cofactor.

The catalysed reaction is O-phospho-L-seryl-[protein] + H2O = L-seryl-[protein] + phosphate. It carries out the reaction O-phospho-L-threonyl-[protein] + H2O = L-threonyl-[protein] + phosphate. In terms of biological role, may dephosphorylate and repress plasma membrane H(+)-ATPases (PM H(+)-ATPases, e.g. AHA1 and AHA2), thus influencing negatively plant growth and fitness. The sequence is that of Probable protein phosphatase 2C 48 from Arabidopsis thaliana (Mouse-ear cress).